The chain runs to 66 residues: MNTKTLIVVFLVCLLVSEVVLARRCGGGRKIKIKKIVRKLRPIVRVMKVITRMRTRRPRPRPCNSS.

Residues 1–22 (MNTKTLIVVFLVCLLVSEVVLA) form the signal peptide.

Post-translationally, contains 1 disulfide bond. As to expression, expressed by the venom gland.

It is found in the secreted. The sequence is that of Venom protein 27.1 from Lychas mucronatus (Chinese swimming scorpion).